We begin with the raw amino-acid sequence, 161 residues long: Putative 4-hydroxy-4-methyl-2-oxoglutarate aldolase (161 aa).

Substrate contacts are provided by residues 78–81 (GDVI) and Arg-100. Residue Asp-101 coordinates a divalent metal cation.

This sequence belongs to the class II aldolase/RraA-like family. As to quaternary structure, homotrimer. It depends on a divalent metal cation as a cofactor.

The catalysed reaction is 4-hydroxy-4-methyl-2-oxoglutarate = 2 pyruvate. It catalyses the reaction oxaloacetate + H(+) = pyruvate + CO2. Functionally, catalyzes the aldol cleavage of 4-hydroxy-4-methyl-2-oxoglutarate (HMG) into 2 molecules of pyruvate. Also contains a secondary oxaloacetate (OAA) decarboxylase activity due to the common pyruvate enolate transition state formed following C-C bond cleavage in the retro-aldol and decarboxylation reactions. In Mycobacterium avium (strain 104), this protein is Putative 4-hydroxy-4-methyl-2-oxoglutarate aldolase.